The primary structure comprises 394 residues: Uroporphyrinogen decarboxylase 2, chloroplastic (394 aa).

Substrate is bound by residues arginine 74–arginine 78, phenylalanine 93, serine 123, aspartate 124, tyrosine 201, serine 256, and histidine 371.

Belongs to the uroporphyrinogen decarboxylase family. Homodimer.

It is found in the plastid. It localises to the chloroplast. The enzyme catalyses uroporphyrinogen III + 4 H(+) = coproporphyrinogen III + 4 CO2. The protein operates within porphyrin-containing compound metabolism; protoporphyrin-IX biosynthesis; coproporphyrinogen-III from 5-aminolevulinate: step 4/4. Its pathway is porphyrin-containing compound metabolism; chlorophyll biosynthesis. Catalyzes the decarboxylation of four acetate groups of uroporphyrinogen-III to yield coproporphyrinogen-III. The protein is Uroporphyrinogen decarboxylase 2, chloroplastic (HEME2) of Arabidopsis thaliana (Mouse-ear cress).